The primary structure comprises 1888 residues: METRSRKRAEATSAAPSSSSSSPPPPPSASGPTTRSKRARLSSSSSSSLAPTPPSSSTTTRSRSSRSAAAAAPMDTSTDSSGFRRGGRGNRGNNNDNSDKGKEKEHDVRIRERERERDRAREQLNMDAAAAAARSADEDDDNDSEDGNGGFMHPNMSSASSALQGLLRKLGAGLDDLLPSSGIGSASSSHLNGRMKKILSGLRAEGEEGKQVEALTQLCEMLSIGTEDSLSTFSVDSFVPVLVGLLNHESNPDIMLLAARALTHLCDVLPSSCAAVVHYGAVSCLVARLLTIEYMDLAEQSLQALKKISQEHPTACLRAGALMAVLSYLDFFSTGVQRVALSTAANMCKKLPSDASDYVMEAVPLLTNLLQYHDSKVLEYASICLTRIAEAFAPYPEKLDELCNHGLVTQAASLISTSNSGGGQASLSVSTYTGLIRLLSTCASGSPLGFRTLLLLGISSILKDILLGSGVSANASVSPALSRPADQIYEIVNLANELLPPLPEGVISLPTSTNALVKGSCQKKSSPSTSGKQEDILKISPREKLLGDQPELLQQFGLDLLPVLVQIYGSSVNGTIRHKCLSVIGKLMYFSSSEMIQSLIGDTNISSFLAGVLAWKDPQVLVPALQVAEILMEKLPETFSKVFVREGVVHAVDQLVLVGKPSHASPTDKDNDCVPGSARSRRYRRRSSNANSDGNQSEEPKNPASLTIGANHNSLDTPTASFMLRETVSSCAKAFKDKYFPSDGGDVDVGVTDDLLHLKNLCTKLTAGIDDHKVKGKGKSKASGPFLGDFSASKEEYLIGVISEILGEISKGDGVSTFEFIGSGVVAALLNYFSCGYFSKEKISELNLPKLRQEGLRRFKAFLEVALPFDGNEGKVPPMTVLIQKLQNALSSLERFPVVLSHPSRSLSGSARLSSGLSALAHPLKLRLCRASGEKTLRDYSSNIVLIDPLASLAAVEEFLWPRVQRSESALKPAAPIGNTEPGTLPSGAGVSSPSSSTPASTTRRHSSRSRSAINIGDTSKKDPVHEKGTSSSKGKGKGVMKPAQADKGPQTRSNAQKRAVLDKDTQMKPASGDSSSEDEELEISPVDIDDALVIEEDDISDDEDDDNEDVLDDSLPMCTPDKVHDVKLADSVDDDGLATSGRQMNPASGGTSGAAAARASDSIDTGIGNSYGSRGALSFAAAAMAGLGAASGRGIRGSRDLHGRTLNRSSDEPSKLIFTAAGKQLSRHLTIYQAVQRQLMLDEDDDDRFGGSDLVSSDGSRFNDIYTIMYQRPDSQVNRLSVGGASSTTPSKSTKSATTNSSVESQSHRASLLDSILQGELPCDLEKSNSTYNVLALLRVLEGLNQLCPRLRAQTLSDRFAEGKITSLDDLSTTAAKVPLDEFVNSKLTPKLARQIQDALALCSGSLPSWCYQLTRACPFLFPFQTRRQYFYSTAFGLSRALNRLQQQQGADGSGSTNEREMRIGRLQRQKVRVSRNRILDSAAKVMEMYSSQKAVLEVEYFGEVGTGLGPTLEFYTLLSHDLQKASLGMWRSSSGDKVSMQIGRDEIEDGKPSAANRDIVLAPLGLFPRPWPSTADISEGGQFHKVIEYFRLLGRVMAKALQDGRLLDVPLSTAFYKLILGQELDLHDIVLFDAELGKTLQELRVVVARKHYLEGVGGDNSSTISDLCLRGCRIEDLSLEFTLPGYPEYILRSGDEIVDITNLEEYISLVVDATVKRGVTRQIEAFRSGFNQVFDITSLQIFTPSELDYLLCGRRELWEVETLAEHIKFDHGYNAKSPAIINLLEIMGELTADQQRAFCQFVTGAPRLPPGGLAVLNPKLTIVRKHSSTSSAAANGAGASETADDDLPSVMTCANYLKLPPYSTKEIMYKKLLYAINEGQGSFDLS.

The segment covering 1-10 has biased composition (basic and acidic residues); it reads METRSRKRAE. Residues 1-157 form a disordered region; the sequence is METRSRKRAE…NGGFMHPNMS (157 aa). The span at 41–81 shows a compositional bias: low complexity; the sequence is LSSSSSSSLAPTPPSSSTTTRSRSSRSAAAAAPMDTSTDSS. Residues 97–124 are compositionally biased toward basic and acidic residues; that stretch reads NSDKGKEKEHDVRIRERERERDRAREQL. Over residues 137–146 the composition is skewed to acidic residues; sequence DEDDDNDSED. ARM repeat units lie at residues 227–267, 270–310, 312–349, and 351–390; these read EDSL…HLCD, PSSC…KISQ, HPTA…NMCK, and LPSD…RIAE. Disordered stretches follow at residues 660 to 711, 970 to 1119, 1134 to 1157, and 1280 to 1307; these read KPSH…IGAN, ALKP…LPMC, DDDG…GAAA, and RLSV…VESQ. Positions 986 to 1002 are enriched in low complexity; sequence PSGAGVSSPSSSTPAST. The segment covering 1019–1029 has biased composition (basic and acidic residues); the sequence is TSKKDPVHEKG. Residues 1076-1113 show a composition bias toward acidic residues; the sequence is SSEDEELEISPVDIDDALVIEEDDISDDEDDDNEDVLD. Low complexity-rich tracts occupy residues 1148 to 1157 and 1286 to 1303; these read ASGGTSGAAA and ASST…TNSS. The segment at 1377–1451 is K-box; sequence AKVPLDEFVN…ALNRLQQQQG (75 aa). Residues 1490–1888 enclose the HECT domain; the sequence is MYSSQKAVLE…NEGQGSFDLS (399 aa). Cysteine 1855 acts as the Glycyl thioester intermediate in catalysis.

It belongs to the UPL family. K-HECT subfamily. In terms of tissue distribution, widely expressed.

The catalysed reaction is S-ubiquitinyl-[E2 ubiquitin-conjugating enzyme]-L-cysteine + [acceptor protein]-L-lysine = [E2 ubiquitin-conjugating enzyme]-L-cysteine + N(6)-ubiquitinyl-[acceptor protein]-L-lysine.. It functions in the pathway protein modification; protein ubiquitination. In terms of biological role, probable E3 ubiquitin-protein ligase which mediates ubiquitination and subsequent proteasomal degradation of target proteins. Involved in the repression of endoreduplication process and the cell morphogenesis in the trichomes. The polypeptide is E3 ubiquitin-protein ligase UPL3 (UPL3) (Arabidopsis thaliana (Mouse-ear cress)).